The following is a 275-amino-acid chain: 4-hydroxy-3-methylbut-2-enyl diphosphate reductase (275 aa).

Cysteine 12 serves as a coordination point for [4Fe-4S] cluster. (2E)-4-hydroxy-3-methylbut-2-enyl diphosphate-binding residues include histidine 40 and histidine 70. 2 residues coordinate dimethylallyl diphosphate: histidine 40 and histidine 70. Isopentenyl diphosphate contacts are provided by histidine 40 and histidine 70. Cysteine 92 provides a ligand contact to [4Fe-4S] cluster. Residue histidine 119 participates in (2E)-4-hydroxy-3-methylbut-2-enyl diphosphate binding. Dimethylallyl diphosphate is bound at residue histidine 119. Histidine 119 is an isopentenyl diphosphate binding site. The Proton donor role is filled by glutamate 121. Threonine 151 provides a ligand contact to (2E)-4-hydroxy-3-methylbut-2-enyl diphosphate. Cysteine 181 serves as a coordination point for [4Fe-4S] cluster. (2E)-4-hydroxy-3-methylbut-2-enyl diphosphate is bound by residues serine 209, serine 210, asparagine 211, and serine 251. Positions 209, 210, 211, and 251 each coordinate dimethylallyl diphosphate. 4 residues coordinate isopentenyl diphosphate: serine 209, serine 210, asparagine 211, and serine 251.

It belongs to the IspH family. The cofactor is [4Fe-4S] cluster.

It carries out the reaction isopentenyl diphosphate + 2 oxidized [2Fe-2S]-[ferredoxin] + H2O = (2E)-4-hydroxy-3-methylbut-2-enyl diphosphate + 2 reduced [2Fe-2S]-[ferredoxin] + 2 H(+). The enzyme catalyses dimethylallyl diphosphate + 2 oxidized [2Fe-2S]-[ferredoxin] + H2O = (2E)-4-hydroxy-3-methylbut-2-enyl diphosphate + 2 reduced [2Fe-2S]-[ferredoxin] + 2 H(+). It functions in the pathway isoprenoid biosynthesis; dimethylallyl diphosphate biosynthesis; dimethylallyl diphosphate from (2E)-4-hydroxy-3-methylbutenyl diphosphate: step 1/1. It participates in isoprenoid biosynthesis; isopentenyl diphosphate biosynthesis via DXP pathway; isopentenyl diphosphate from 1-deoxy-D-xylulose 5-phosphate: step 6/6. Catalyzes the conversion of 1-hydroxy-2-methyl-2-(E)-butenyl 4-diphosphate (HMBPP) into a mixture of isopentenyl diphosphate (IPP) and dimethylallyl diphosphate (DMAPP). Acts in the terminal step of the DOXP/MEP pathway for isoprenoid precursor biosynthesis. The chain is 4-hydroxy-3-methylbut-2-enyl diphosphate reductase from Thermotoga petrophila (strain ATCC BAA-488 / DSM 13995 / JCM 10881 / RKU-1).